A 183-amino-acid polypeptide reads, in one-letter code: ATP synthase subunit delta (183 aa).

The protein belongs to the ATPase delta chain family. In terms of assembly, F-type ATPases have 2 components, F(1) - the catalytic core - and F(0) - the membrane proton channel. F(1) has five subunits: alpha(3), beta(3), gamma(1), delta(1), epsilon(1). F(0) has three main subunits: a(1), b(2) and c(10-14). The alpha and beta chains form an alternating ring which encloses part of the gamma chain. F(1) is attached to F(0) by a central stalk formed by the gamma and epsilon chains, while a peripheral stalk is formed by the delta and b chains.

It localises to the cell inner membrane. In terms of biological role, f(1)F(0) ATP synthase produces ATP from ADP in the presence of a proton or sodium gradient. F-type ATPases consist of two structural domains, F(1) containing the extramembraneous catalytic core and F(0) containing the membrane proton channel, linked together by a central stalk and a peripheral stalk. During catalysis, ATP synthesis in the catalytic domain of F(1) is coupled via a rotary mechanism of the central stalk subunits to proton translocation. Its function is as follows. This protein is part of the stalk that links CF(0) to CF(1). It either transmits conformational changes from CF(0) to CF(1) or is implicated in proton conduction. The chain is ATP synthase subunit delta from Desulfovibrio desulfuricans (strain ATCC 27774 / DSM 6949 / MB).